Reading from the N-terminus, the 506-residue chain is Asparagine--tRNA ligase (506 aa).

Belongs to the class-II aminoacyl-tRNA synthetase family. Homodimer.

It localises to the cytoplasm. It carries out the reaction tRNA(Asn) + L-asparagine + ATP = L-asparaginyl-tRNA(Asn) + AMP + diphosphate + H(+). The polypeptide is Asparagine--tRNA ligase (Onion yellows phytoplasma (strain OY-M)).